The primary structure comprises 499 residues: Trichothecene C-4 hydroxylase (499 aa).

The chain crosses the membrane as a helical span at residues 7–29; sequence VGVAVQLVLTVLLASIPLRVIWN. Residues N173 and N287 are each glycosylated (N-linked (GlcNAc...) asparagine). A heme-binding site is contributed by C442. N473 carries N-linked (GlcNAc...) asparagine glycosylation.

The protein belongs to the cytochrome P450 family. Heme is required as a cofactor.

It is found in the membrane. It participates in sesquiterpene biosynthesis; trichothecene biosynthesis. Trichothecene C-4 hydroxylase; part of the gene cluster that mediates the production of the antimicrobial trichothecene harzianum A (HA) that plays a role in Botrytis cinerea antagonistic activity and plant defense priming. The biosynthesis of harzianum A begins with the cyclization of farnesyl diphosphate to trichodiene and is catalyzed by the trichodiene synthase TRI5. Trichodiene undergoes a series of oxygenations catalyzed by the cytochrome P450 monooxygenase TRI4. TRI4 controls the addition of 3 oxygens at C-2, C-11, and the C-12, C-13-epoxide to form the intermediate isotrichodiol. Isotrichodiol then undergoes a non-enzymatic isomerization and cyclization to form 12,13-epoxytrichothec-9-ene (EPT) which is further converted to trichodermol by the cytochrome P450 monooxygenase TRI11 via C-4 hydroxylation. The last step of HA synthesis is esterification of an octatriendioyl moiety to the C-4 oxygen of trichodermol. The octatriendioyl moiety is probably produced by the polyketide synthase TRI17 and the esterification performed by the trichothecene O-acetyltransferase TRI3. In Trichoderma arundinaceum, this protein is Trichothecene C-4 hydroxylase.